A 1074-amino-acid chain; its full sequence is DNA double-strand break repair Rad50 ATPase (1074 aa).

Residues arginine 12, 32–38, and glutamine 142 each bind ATP; that span reads NGSGKSS. Coiled-coil stretches lie at residues 355–402 and 452–506; these read ELEK…REKA and NLVE…KGLG. Positions 512–611 constitute a Zinc-hook domain; that stretch reads LENLEDFSEL…KITRLKDAKK (100 aa). Residues cysteine 559 and cysteine 562 each contribute to the Zn(2+) site. Coiled coils occupy residues 574 to 611, 649 to 678, 749 to 823, and 865 to 895; these read TAEE…DAKK, LKLE…LQVQ, KEKL…EILE, and TEEK…LKAL. 973-978 serves as a coordination point for ATP; sequence LLSGGE.

It belongs to the SMC family. RAD50 subfamily. As to quaternary structure, homodimer. Forms a heterotetramer composed of two Mre11 subunits and two Rad50 subunits. Zn(2+) is required as a cofactor.

Part of the Rad50/Mre11 complex, which is involved in the early steps of DNA double-strand break (DSB) repair. The complex may facilitate opening of the processed DNA ends to aid in the recruitment of HerA and NurA. Rad50 controls the balance between DNA end bridging and DNA resection via ATP-dependent structural rearrangements of the Rad50/Mre11 complex. In Methanosarcina acetivorans (strain ATCC 35395 / DSM 2834 / JCM 12185 / C2A), this protein is DNA double-strand break repair Rad50 ATPase.